A 365-amino-acid chain; its full sequence is uncharacterized protein (365 aa).

Disordered stretches follow at residues 119–157 (ERSR…QQES), 216–298 (RPPG…DISH), and 313–365 (SHHH…LSVG). The span at 326-340 (SDPRIESRDLPERPQ) shows a compositional bias: basic and acidic residues.

This is an uncharacterized protein from Homo sapiens (Human).